The chain runs to 1023 residues: 2-oxoglutarate dehydrogenase complex component E1 (1023 aa).

A mitochondrion-targeting transit peptide spans 1–40; sequence MFHLRTCAAKLRPLTASQTVKTFSQNKPAAIRTFQQIRCY. N6-succinyllysine is present on Lys-74. At Ser-100 the chain carries Phosphoserine. 3 residues coordinate Ca(2+): His-143, Asp-156, and Asp-158. Arg-312 is a binding site for thiamine diphosphate. Lys-401 is subject to N6-acetyllysine. The thiamine diphosphate site is built by Asp-411, Asn-444, and Ile-446. Positions 411, 444, and 446 each coordinate Mg(2+). Lys-534 participates in a covalent cross-link: Glycyl lysine isopeptide (Lys-Gly) (interchain with G-Cter in ubiquitin). At Lys-564 the chain carries N6-succinyllysine. Thiamine diphosphate is bound at residue Gln-676. The recognized by alloreactive CD8 cytotoxic T-lymphocytes in association with a class I MHC protein stretch occupies residues 933-939; sequence LSPFPFD. Lys-970 is modified (N6-acetyllysine).

Belongs to the alpha-ketoglutarate dehydrogenase family. In terms of assembly, homodimer. The 2-oxoglutarate dehydrogenase complex is composed of OGDH (2-oxoglutarate dehydrogenase; E1), DLST (dihydrolipoamide succinyltransferase; E2), DLD (dihydrolipoamide dehydrogenase; E3) and the assembly factor KGD4. It contains multiple copies of the three enzymatic components (E1, E2 and E3). In the nucleus, the 2-oxoglutarate dehydrogenase complex associates with KAT2A. Interacts with ABHD11; this interaction maintains the functional lipoylation of the 2-oxoglutarate dehydrogenase complex. Requires thiamine diphosphate as cofactor. The cofactor is Mg(2+).

It is found in the mitochondrion. The protein resides in the nucleus. The enzyme catalyses N(6)-[(R)-lipoyl]-L-lysyl-[protein] + 2-oxoglutarate + H(+) = N(6)-[(R)-S(8)-succinyldihydrolipoyl]-L-lysyl-[protein] + CO2. Its activity is regulated as follows. Calcium ions and ADP stimulate, whereas ATP and NADH reduce catalytic activity. Functionally, 2-oxoglutarate dehydrogenase (E1o) component of the 2-oxoglutarate dehydrogenase complex (OGDHC). Participates in the first step, rate limiting for the overall conversion of 2-oxoglutarate to succinyl-CoA and CO(2) catalyzed by the whole OGDHC. Catalyzes the irreversible decarboxylation of 2-oxoglutarate (alpha-ketoglutarate) via the thiamine diphosphate (ThDP) cofactor and subsequent transfer of the decarboxylated acyl intermediate on an oxidized dihydrolipoyl group that is covalently amidated to the E2 enzyme (dihydrolipoyllysine-residue succinyltransferase or DLST). Plays a key role in the Krebs (citric acid) cycle, which is a common pathway for oxidation of fuel molecules, including carbohydrates, fatty acids, and amino acids. Can catalyze the decarboxylation of 2-oxoadipate in vitro, but at a much lower rate than 2-oxoglutarate. Mainly active in the mitochondrion. A fraction of the 2-oxoglutarate dehydrogenase complex also localizes in the nucleus and is required for lysine succinylation of histones: associates with KAT2A on chromatin and provides succinyl-CoA to histone succinyltransferase KAT2A. The polypeptide is 2-oxoglutarate dehydrogenase complex component E1 (Mus musculus (Mouse)).